Consider the following 145-residue polypeptide: Secreted RxLR effector protein 100 (145 aa).

The N-terminal stretch at 1 to 19 (MRYLLLTFFTFHCQMVADA) is a signal peptide. Positions 27–30 (RLLR) match the RxLR motif. Residues 38–77 (SGEGKIEEAGMIVTTGAPTPENETMEHNEVPQSTTDTDQK) form a disordered region. An N-linked (GlcNAc...) asparagine glycan is attached at asparagine 59.

The protein belongs to the RxLR effector family.

Its subcellular location is the secreted. The protein resides in the host nucleus. Secreted effector that dos not suppress the host cell death induced by cell death-inducing proteins. The protein is Secreted RxLR effector protein 100 of Plasmopara viticola (Downy mildew of grapevine).